A 303-amino-acid polypeptide reads, in one-letter code: L(+)-tartrate dehydratase subunit alpha (303 aa).

Iron-sulfur cluster is bound by residues C71, C190, and C277.

Belongs to the class-I fumarase family. In terms of assembly, tetramer of two alpha and two beta subunits. The cofactor is iron-sulfur cluster.

The enzyme catalyses (2R,3R)-tartrate = oxaloacetate + H2O. The sequence is that of L(+)-tartrate dehydratase subunit alpha (ttdA) from Escherichia coli O157:H7.